The sequence spans 253 residues: Triosephosphate isomerase (253 aa).

9–11 (NWK) serves as a coordination point for substrate. The active-site Electrophile is the H97. E169 functions as the Proton acceptor in the catalytic mechanism. Substrate-binding positions include G175, S215, and 236-237 (GG).

This sequence belongs to the triosephosphate isomerase family. Homodimer.

It localises to the cytoplasm. It catalyses the reaction D-glyceraldehyde 3-phosphate = dihydroxyacetone phosphate. The protein operates within carbohydrate biosynthesis; gluconeogenesis. It participates in carbohydrate degradation; glycolysis; D-glyceraldehyde 3-phosphate from glycerone phosphate: step 1/1. Its function is as follows. Involved in the gluconeogenesis. Catalyzes stereospecifically the conversion of dihydroxyacetone phosphate (DHAP) to D-glyceraldehyde-3-phosphate (G3P). This is Triosephosphate isomerase from Staphylococcus aureus (strain NCTC 8325 / PS 47).